Consider the following 359-residue polypeptide: Histidinol-phosphate aminotransferase (359 aa).

Position 217 is an N6-(pyridoxal phosphate)lysine (K217).

This sequence belongs to the class-II pyridoxal-phosphate-dependent aminotransferase family. Histidinol-phosphate aminotransferase subfamily. As to quaternary structure, homodimer. The cofactor is pyridoxal 5'-phosphate.

It carries out the reaction L-histidinol phosphate + 2-oxoglutarate = 3-(imidazol-4-yl)-2-oxopropyl phosphate + L-glutamate. It functions in the pathway amino-acid biosynthesis; L-histidine biosynthesis; L-histidine from 5-phospho-alpha-D-ribose 1-diphosphate: step 7/9. In Citrobacter koseri (strain ATCC BAA-895 / CDC 4225-83 / SGSC4696), this protein is Histidinol-phosphate aminotransferase.